The sequence spans 638 residues: Broad-specificity ulvan lyase (638 aa).

A signal peptide spans 1–27; the sequence is MKRRNFIQLSSLATIGMSLPSAGIVNA.

The protein belongs to the polysaccharide lyase 37 family.

Its subcellular location is the periplasm. The catalysed reaction is Endolytic cleavage of (1-&gt;4)-beta-galactosaminic bonds between N-acetylgalactosamine and either D-glucuronic acid or L-iduronic acid to produce a mixture of Delta(4)-unsaturated oligosaccharides of different sizes that are ultimately degraded to Delta(4)-unsaturated tetra- and disaccharides.. The enzyme catalyses Elimination of sulfate, appears to act on linkages between N-acetyl-D-glucosamine and uronate. Product is an unsaturated sugar.. Broad-specificity lyase involved in ulvan degradation. Ulvan is the main polysaccharide component of the Ulvales (green seaweed) cell wall. It is composed of disaccharide building blocks comprising 3-sulfated rhamnose (Rha3S) linked to D-glucuronic acid (GlcA), L-iduronic acid (IduA), or D-xylose (Xyl). Ulvan lyase catalyzes the endolytic cleavage of the glycosidic bond between Rha3S and the uronic acids GlcA or IduA, producing oligosaccharides that have unsaturated 4-deoxy-L-threo-hex-4-enopyranosiduronic acid (deltaUA) at the non-reducing end. This results eventually in the degradation of the ulvan polysaccharide into deltaUA-Rha3S disaccharides and deltaUA-Rha3S-Xyl-Rha3S tetrasaccharides. It is also able to degrade the glycosaminoglycans heparan sulfate and chondroitin sulfate. Not active against pectin, xanthan or alginate. In Formosa agariphila (strain DSM 15362 / KCTC 12365 / LMG 23005 / KMM 3901 / M-2Alg 35-1), this protein is Broad-specificity ulvan lyase.